The following is a 158-amino-acid chain: 2-C-methyl-D-erythritol 2,4-cyclodiphosphate synthase (158 aa).

2 residues coordinate a divalent metal cation: Asp-9 and His-11. 4-CDP-2-C-methyl-D-erythritol 2-phosphate contacts are provided by residues Asp-9 to His-11 and His-35 to Ser-36. His-43 serves as a coordination point for a divalent metal cation. 4-CDP-2-C-methyl-D-erythritol 2-phosphate contacts are provided by residues Asp-57 to Gly-59, Phe-62 to Asp-66, Ala-101 to Ala-107, Thr-133 to Glu-136, Phe-140, and Arg-143.

It belongs to the IspF family. Homotrimer. Requires a divalent metal cation as cofactor.

It catalyses the reaction 4-CDP-2-C-methyl-D-erythritol 2-phosphate = 2-C-methyl-D-erythritol 2,4-cyclic diphosphate + CMP. Its pathway is isoprenoid biosynthesis; isopentenyl diphosphate biosynthesis via DXP pathway; isopentenyl diphosphate from 1-deoxy-D-xylulose 5-phosphate: step 4/6. Involved in the biosynthesis of isopentenyl diphosphate (IPP) and dimethylallyl diphosphate (DMAPP), two major building blocks of isoprenoid compounds. Catalyzes the conversion of 4-diphosphocytidyl-2-C-methyl-D-erythritol 2-phosphate (CDP-ME2P) to 2-C-methyl-D-erythritol 2,4-cyclodiphosphate (ME-CPP) with a corresponding release of cytidine 5-monophosphate (CMP). The protein is 2-C-methyl-D-erythritol 2,4-cyclodiphosphate synthase of Lysinibacillus sphaericus (strain C3-41).